A 107-amino-acid polypeptide reads, in one-letter code: Large ribosomal subunit protein eL33 (107 aa).

It belongs to the eukaryotic ribosomal protein eL33 family. In terms of assembly, component of the large ribosomal subunit. Mature ribosomes consist of a small (40S) and a large (60S) subunit. The 40S subunit contains about 32 different proteins and 1 molecule of RNA (18S). The 60S subunit contains 45 different proteins and 3 molecules of RNA (25S, 5.8S and 5S).

It is found in the cytoplasm. Its function is as follows. Component of the ribosome, a large ribonucleoprotein complex responsible for the synthesis of proteins in the cell. The small ribosomal subunit (SSU) binds messenger RNAs (mRNAs) and translates the encoded message by selecting cognate aminoacyl-transfer RNA (tRNA) molecules. The large subunit (LSU) contains the ribosomal catalytic site termed the peptidyl transferase center (PTC), which catalyzes the formation of peptide bonds, thereby polymerizing the amino acids delivered by tRNAs into a polypeptide chain. The nascent polypeptides leave the ribosome through a tunnel in the LSU and interact with protein factors that function in enzymatic processing, targeting, and the membrane insertion of nascent chains at the exit of the ribosomal tunnel. This Candida albicans (strain SC5314 / ATCC MYA-2876) (Yeast) protein is Large ribosomal subunit protein eL33.